Consider the following 230-residue polypeptide: MKTALRGAGRVLLVLVALFVLYQLWIFTLVLWWSHFNPSSTSFMELRLDELQAKRPDVELRHEWVPYDRISIHLKRAVITAEDDTFIDHDGFDWEGMQRALEKNQRKGRAVAGGSTISQQLAKNLFLSPSKSYFRKAQEALITVMIEAVWSKRRILEVYLNVVEWGNGIFGCEAAARRYFRVAASRLGPAEAARLAVMLPNPRRYEKQFGPRLAAHARRIRSRMVYATVP.

The chain crosses the membrane as a helical span at residues 11–31; the sequence is VLLVLVALFVLYQLWIFTLVL.

Belongs to the glycosyltransferase 51 family.

It localises to the cell inner membrane. It carries out the reaction [GlcNAc-(1-&gt;4)-Mur2Ac(oyl-L-Ala-gamma-D-Glu-L-Lys-D-Ala-D-Ala)](n)-di-trans,octa-cis-undecaprenyl diphosphate + beta-D-GlcNAc-(1-&gt;4)-Mur2Ac(oyl-L-Ala-gamma-D-Glu-L-Lys-D-Ala-D-Ala)-di-trans,octa-cis-undecaprenyl diphosphate = [GlcNAc-(1-&gt;4)-Mur2Ac(oyl-L-Ala-gamma-D-Glu-L-Lys-D-Ala-D-Ala)](n+1)-di-trans,octa-cis-undecaprenyl diphosphate + di-trans,octa-cis-undecaprenyl diphosphate + H(+). Its pathway is cell wall biogenesis; peptidoglycan biosynthesis. Its function is as follows. Peptidoglycan polymerase that catalyzes glycan chain elongation from lipid-linked precursors. This is Biosynthetic peptidoglycan transglycosylase from Aromatoleum aromaticum (strain DSM 19018 / LMG 30748 / EbN1) (Azoarcus sp. (strain EbN1)).